A 94-amino-acid chain; its full sequence is Large ribosomal subunit protein bL28 (94 aa).

The interval 1–21 (MARRCEVTGRGTVSGNNVSHS) is disordered. Polar residues predominate over residues 11–20 (GTVSGNNVSH).

It belongs to the bacterial ribosomal protein bL28 family.

This is Large ribosomal subunit protein bL28 from Leptospira borgpetersenii serovar Hardjo-bovis (strain JB197).